Reading from the N-terminus, the 656-residue chain is Acyl-CoA-binding domain-containing protein 6 (656 aa).

One can recognise an ACB domain in the interval 8–102; it reads YPDRFYAAAA…LEEEDPGWYS (95 aa). Residues 44–48 and lysine 70 each bind an acyl-CoA; that span reads YGLYQ. The tract at residues 129 to 148 is disordered; the sequence is ASTNGTSVPEPKTISENGSS. 6 Kelch repeats span residues 194–241, 254–304, 305–354, 356–405, 406–454, and 461–507; these read KMYI…AQVS, KFFS…LVGT, TLVL…CHAD, YLLI…TVGE, NWYI…LVHS, and YLIS…EPEV. Residues 527–636 are a coiled coil; it reads LKKDDANELL…EQAALEAKQR (110 aa). The interval 627-656 is disordered; it reads EQAALEAKQRQSSSGMWGWLVGTPPDKSES.

The protein belongs to the ACBP family. Highly expressed in leaves. Expressed in roots and seeds.

The protein localises to the peroxisome. Its function is as follows. Binds medium- and long-chain acyl-CoA esters with high affinity. Can interact in vitro with linoleoyl-CoA and linolenoyl-CoA. Binds phosphatidic acid (PA) and phosphatidylcholine (PC) in vitro. May play a role in the biosynthesis of phospholipids. May be involved in lipid degradation via peroxisomal beta-oxydation. This is Acyl-CoA-binding domain-containing protein 6 from Oryza sativa subsp. japonica (Rice).